Consider the following 170-residue polypeptide: Peptide deformylase (170 aa).

Cys-91 and His-133 together coordinate Fe cation. Glu-134 is an active-site residue. Residue His-137 participates in Fe cation binding.

This sequence belongs to the polypeptide deformylase family. Fe(2+) serves as cofactor.

It catalyses the reaction N-terminal N-formyl-L-methionyl-[peptide] + H2O = N-terminal L-methionyl-[peptide] + formate. Its function is as follows. Removes the formyl group from the N-terminal Met of newly synthesized proteins. Requires at least a dipeptide for an efficient rate of reaction. N-terminal L-methionine is a prerequisite for activity but the enzyme has broad specificity at other positions. The polypeptide is Peptide deformylase (Pasteurella multocida (strain Pm70)).